The following is a 294-amino-acid chain: 3-methyl-2-oxobutanoate hydroxymethyltransferase 1 (294 aa).

Residue aspartate 55 coordinates Mg(2+). Residues 55 to 56 and lysine 123 each bind 3-methyl-2-oxobutanoate; that span reads DS. Glutamate 192 functions as the Proton acceptor in the catalytic mechanism.

This sequence belongs to the PanB family. As to quaternary structure, homodecamer; pentamer of dimers. The cofactor is Mg(2+).

It is found in the cytoplasm. It catalyses the reaction 3-methyl-2-oxobutanoate + (6R)-5,10-methylene-5,6,7,8-tetrahydrofolate + H2O = 2-dehydropantoate + (6S)-5,6,7,8-tetrahydrofolate. It participates in cofactor biosynthesis; (R)-pantothenate biosynthesis; (R)-pantoate from 3-methyl-2-oxobutanoate: step 1/2. Functionally, catalyzes the reversible reaction in which hydroxymethyl group from 5,10-methylenetetrahydrofolate is transferred onto alpha-ketoisovalerate to form ketopantoate. The sequence is that of 3-methyl-2-oxobutanoate hydroxymethyltransferase 1 from Methylibium petroleiphilum (strain ATCC BAA-1232 / LMG 22953 / PM1).